The chain runs to 1254 residues: MATPLPDFETARGGGAVASSSTTVLPSSVSSSSSSSRPLPVANSFSDDAEEISPILIFLFFHKAVCSELEALHRLALEFATGHHVDLRLLRERYRFLRSIYKHHCNAEDEVIFSALDIRVKNVAQTYSLEHKGESNLFDHLFELLNSATETDESYRRELARSTGALQTSVSQHLAKEQKQVFPLLIEKFKYEEQAYIVWRFLCSIPVNMLAVFLPWISSSISVDESKEMQTCLKKIVPGEKLLQQVIFTWLGGKSNTVASCRIEDSMFQCCLDSSSSMLPCKASREQCACEGSKIGKRKYPELTNFGSSDTLHPVDEIKLWHKSINKEMKEIADEARKIQLSGDFSDLSAFDERLQYIAEVCIFHSLAEDKIIFPAVDGEFSFSEEHDEEENQFNEFRCLIENIKSAGASSTSAAEFYTKLCSHADQIMETIQRHFHNEEIQVLPLARKNFSFKRQQELLYQSLCIMPLRLIERVLPWLTASLTEDEAKNFLKNLQAGAPKSDVALVTLFSGWACKGRKAGECLSPNGNGLCPVKTLSNIKEVNLQSCNACASVPCTSRSTKSCCQHQDKRPAKRTAVLSCEKKTTPHSTEVANGCKPSGNGRSCCVPDLGVNNNCLELGSLPAAKAMRSSSLNSAAPALNSSLFIWEMDSNSFGTGHAERPVATIFKFHKAISKDLEFLDVESGKLIDCDGTFIRQFIGRFHLLWGFYKAHSNAEDDILFPALESKETLHNVSHSYTLDHKQEEKLFGDIYSVLTELSILHEKLQSDSMMEDIAQTDTVRTDIDNGDCNKKYNELATKLQGMCKSIKITLDQHIFLEELELWPLFDKHFSIQEQDKIVGRIIGTTGAEVLQSMLPWVTSALSEDEQNRMMDTWKQATKNTMFDEWLNECWKGSPDSSSTETSKPSPQKDNDHQEILDQSGELFKPGWKDIFRMNQNELEAEIRKVYQDSTLDPRRKDYLVQNWRTSRWIAAQQKLPKEAETAVNGDVELGCSPSFRDPEKQIYGCEHYKRNCKLRAACCDQLFTCRFCHDKVSDHSMDRKLVTEMLCMRCLKVQPVGPICTTPSCDGFPMAKHYCSICKLFDDERAVYHCPFCNLCRVGEGLGIDFFHCMTCNCCLGMKLVNHKCLEKSLETNCPICCEFLFTSSEAVRALPCGHYMHSACFQAYTCSHYTCPICGKSLGDMAVYFGMLDALLAAEELPEEYKNRCQDILCNDCERKGTTRFHWLYHKCGSCGSYNTRVIKSETIPPDCSTSS.

The interval 1-40 is disordered; the sequence is MATPLPDFETARGGGAVASSSTTVLPSSVSSSSSSSRPLP. Residues 19–40 show a composition bias toward low complexity; it reads SSSTTVLPSSVSSSSSSSRPLP. The helical transmembrane segment at 201–221 threads the bilayer; it reads FLCSIPVNMLAVFLPWISSSI. Residues 893–913 are disordered; that stretch reads GSPDSSSTETSKPSPQKDNDH. The span at 895-906 shows a compositional bias: polar residues; it reads PDSSSTETSKPS. A CHY-type zinc finger spans residues 999-1068; sequence PEKQIYGCEH…PICTTPSCDG (70 aa). Positions 1006, 1008, 1019, 1020, 1026, 1029, 1030, 1036, 1048, 1051, 1061, 1066, 1076, 1079, 1090, 1091, 1094, 1097, 1109, 1110, 1113, 1116, 1124, and 1126 each coordinate Zn(2+). A CTCHY-type zinc finger spans residues 1071–1134; it reads MAKHYCSICK…KCLEKSLETN (64 aa). Residues 1135–1176 form an RING-type; atypical zinc finger; it reads CPICCEFLFTSSEAVRALPCGHYMHSACFQAYTCSHYTCPIC.

As to quaternary structure, interacts with the PYEL proteins bHLH115, bHLH104 and ILR3 in the nucleus. Binds zinc and iron ions. Expressed in cotyledons of seedlings, young leaves, developing and mature embryos, and other reproductive tissues including floral vasculature, funiculus, septum, and gynoecium valves.

The protein resides in the membrane. It localises to the nucleus. Its pathway is protein modification; protein ubiquitination. In terms of biological role, essential protein. Negatively regulates the response to iron deficiency and thus contributes to iron homeostasis. Exhibits E3 ubiquitin-protein ligase activity in vitro. Plays a role in root growth, rhizosphere acidification, and iron reductase activity in response to iron deprivation. Facilitates 26S proteasome-mediated degradation of PYEL proteins in the absence of iron. This is Zinc finger protein BRUTUS from Arabidopsis thaliana (Mouse-ear cress).